We begin with the raw amino-acid sequence, 177 residues long: Large ribosomal subunit protein uL6 (177 aa).

This sequence belongs to the universal ribosomal protein uL6 family. Part of the 50S ribosomal subunit.

Functionally, this protein binds to the 23S rRNA, and is important in its secondary structure. It is located near the subunit interface in the base of the L7/L12 stalk, and near the tRNA binding site of the peptidyltransferase center. This Sinorhizobium medicae (strain WSM419) (Ensifer medicae) protein is Large ribosomal subunit protein uL6.